A 271-amino-acid polypeptide reads, in one-letter code: Shikimate dehydrogenase (NADP(+)) (271 aa).

Shikimate contacts are provided by residues 16-18 (SRS) and T63. The active-site Proton acceptor is K67. Shikimate-binding residues include N88 and D104. NADP(+) is bound by residues 128–132 (GAGGA), 152–157 (NRTASK), and M215. Y217 is a binding site for shikimate. Residue G238 participates in NADP(+) binding.

The protein belongs to the shikimate dehydrogenase family. In terms of assembly, homodimer.

The enzyme catalyses shikimate + NADP(+) = 3-dehydroshikimate + NADPH + H(+). It functions in the pathway metabolic intermediate biosynthesis; chorismate biosynthesis; chorismate from D-erythrose 4-phosphate and phosphoenolpyruvate: step 4/7. Functionally, involved in the biosynthesis of the chorismate, which leads to the biosynthesis of aromatic amino acids. Catalyzes the reversible NADPH linked reduction of 3-dehydroshikimate (DHSA) to yield shikimate (SA). The polypeptide is Shikimate dehydrogenase (NADP(+)) (Chromohalobacter salexigens (strain ATCC BAA-138 / DSM 3043 / CIP 106854 / NCIMB 13768 / 1H11)).